A 132-amino-acid polypeptide reads, in one-letter code: Small ribosomal subunit protein uS8 (132 aa).

It belongs to the universal ribosomal protein uS8 family. Part of the 30S ribosomal subunit. Contacts proteins S5 and S12.

Functionally, one of the primary rRNA binding proteins, it binds directly to 16S rRNA central domain where it helps coordinate assembly of the platform of the 30S subunit. This Psychrobacter arcticus (strain DSM 17307 / VKM B-2377 / 273-4) protein is Small ribosomal subunit protein uS8.